A 920-amino-acid chain; its full sequence is Probable helicase HelY (920 aa).

The 159-residue stretch at 26-184 folds into the Helicase ATP-binding domain; sequence CAALERGHGV…WVQTVRGDTT (159 aa). 39-46 is a binding site for ATP; it reads APTGAGKT. A DEVH box motif is present at residues 132–135; sequence DEVH. Residues 265–469 enclose the Helicase C-terminal domain; the sequence is EVIAILDAEG…SYNMTINLVH (205 aa).

The protein belongs to the helicase family. SKI2 subfamily.

This Mycobacterium leprae (strain TN) protein is Probable helicase HelY (helY).